Reading from the N-terminus, the 199-residue chain is uncharacterized protein (199 aa).

An N-terminal signal peptide occupies residues 1–23 (MSARAPKELRLALPPCLLNRTFA). N-linked (GlcNAc...) asparagine glycosylation is found at Asn-19 and Asn-26. The Extracellular segment spans residues 24–60 (SHNASGGSSAGLRSSGAGGGTCITQVGQQLFQSFSST). Residues 61-81 (LVLIVLVTLIFCLLVLSLSTF) traverse the membrane as a helical segment. Topologically, residues 82 to 199 (HIHKRRMKKR…EGLLQTVVLS (118 aa)) are cytoplasmic. Residues 93-190 (MQRAQEEYER…ASSCLDTPGE (98 aa)) are disordered. 2 stretches are compositionally biased toward basic and acidic residues: residues 95-106 (RAQEEYERDHCS) and 124-135 (HGKETRLERQPR). Residues 147–163 (SSSSSSSSSPGLLCQGP) show a composition bias toward low complexity. Residues 164-176 (CAPPPPLPAPTPQ) show a composition bias toward pro residues.

It localises to the membrane. This is an uncharacterized protein from Mus musculus (Mouse).